A 331-amino-acid chain; its full sequence is Tryptophan--tRNA ligase (331 aa).

ATP-binding positions include 10–12 (QPS) and 18–19 (GN). The 'HIGH' region motif lies at 11 to 19 (PSGQLTLGN). Asp133 lines the L-tryptophan pocket. ATP is bound by residues 145–147 (GED), Val184, and 193–197 (KMSKS). Positions 193–197 (KMSKS) match the 'KMSKS' region motif.

It belongs to the class-I aminoacyl-tRNA synthetase family. Homodimer.

Its subcellular location is the cytoplasm. The enzyme catalyses tRNA(Trp) + L-tryptophan + ATP = L-tryptophyl-tRNA(Trp) + AMP + diphosphate + H(+). Catalyzes the attachment of tryptophan to tRNA(Trp). The sequence is that of Tryptophan--tRNA ligase from Listeria monocytogenes serotype 4b (strain F2365).